The primary structure comprises 144 residues: Large ribosomal subunit protein uL13 (144 aa).

The protein belongs to the universal ribosomal protein uL13 family. As to quaternary structure, part of the 50S ribosomal subunit.

In terms of biological role, this protein is one of the early assembly proteins of the 50S ribosomal subunit, although it is not seen to bind rRNA by itself. It is important during the early stages of 50S assembly. This is Large ribosomal subunit protein uL13 from Mesomycoplasma hyopneumoniae (strain 7448) (Mycoplasma hyopneumoniae).